The primary structure comprises 632 residues: Arginine--tRNA ligase (632 aa).

The 'HIGH' region signature appears at 120–130; sequence ANPIHPLHIGH.

It belongs to the class-I aminoacyl-tRNA synthetase family.

The protein localises to the cytoplasm. It carries out the reaction tRNA(Arg) + L-arginine + ATP = L-arginyl-tRNA(Arg) + AMP + diphosphate. The chain is Arginine--tRNA ligase from Pyrobaculum islandicum (strain DSM 4184 / JCM 9189 / GEO3).